Consider the following 363-residue polypeptide: Phospho-N-acetylmuramoyl-pentapeptide-transferase (363 aa).

The next 10 membrane-spanning stretches (helical) occupy residues Tyr-33–Pro-53, Gly-82–Val-102, Leu-105–Val-125, Gly-133–His-153, Pro-166–Ile-186, Leu-198–Leu-218, Leu-227–Gly-247, Ala-271–Met-291, Val-295–Val-315, and Val-340–Phe-360.

It belongs to the glycosyltransferase 4 family. MraY subfamily. Mg(2+) serves as cofactor.

The protein localises to the cell inner membrane. It carries out the reaction UDP-N-acetyl-alpha-D-muramoyl-L-alanyl-gamma-D-glutamyl-meso-2,6-diaminopimeloyl-D-alanyl-D-alanine + di-trans,octa-cis-undecaprenyl phosphate = di-trans,octa-cis-undecaprenyl diphospho-N-acetyl-alpha-D-muramoyl-L-alanyl-D-glutamyl-meso-2,6-diaminopimeloyl-D-alanyl-D-alanine + UMP. Its pathway is cell wall biogenesis; peptidoglycan biosynthesis. Catalyzes the initial step of the lipid cycle reactions in the biosynthesis of the cell wall peptidoglycan: transfers peptidoglycan precursor phospho-MurNAc-pentapeptide from UDP-MurNAc-pentapeptide onto the lipid carrier undecaprenyl phosphate, yielding undecaprenyl-pyrophosphoryl-MurNAc-pentapeptide, known as lipid I. The protein is Phospho-N-acetylmuramoyl-pentapeptide-transferase of Treponema pallidum (strain Nichols).